Here is a 394-residue protein sequence, read N- to C-terminus: Deoxyguanosinetriphosphate triphosphohydrolase-like protein (394 aa).

The segment at 1–36 (MSQAPYFVPRAPYAEDPSKSKGRRFKEDESRTRTPF) is disordered. The span at 25-36 (FKEDESRTRTPF) shows a compositional bias: basic and acidic residues. The region spanning 70 to 210 (RLTHTLEVAQ…AALADDIAYN (141 aa)) is the HD domain.

Belongs to the dGTPase family. Type 2 subfamily.

The sequence is that of Deoxyguanosinetriphosphate triphosphohydrolase-like protein from Caulobacter vibrioides (strain ATCC 19089 / CIP 103742 / CB 15) (Caulobacter crescentus).